Here is a 153-residue protein sequence, read N- to C-terminus: MSQARTLHRLIAPAVEALGFELVGCELFRRGATRILQVFVDKPGGIGLDECAKVSRQISAVLDVEDPIRGRYTLEVSSPGLERPLYTANHYRRFIGNKAKIRLREPREGQRQFRGMIVAVDNEEQVTLQLDNKILKVPLGEIEKANLIADFEG.

It belongs to the RimP family.

The protein resides in the cytoplasm. Its function is as follows. Required for maturation of 30S ribosomal subunits. This chain is Ribosome maturation factor RimP, found in Coxiella burnetii (strain Dugway 5J108-111).